A 243-amino-acid chain; its full sequence is Triosephosphate isomerase (243 aa).

9–11 (NWK) is a binding site for substrate. Catalysis depends on H96, which acts as the Electrophile. Residue E165 is the Proton acceptor of the active site. Substrate contacts are provided by residues G171, S204, and 225 to 226 (GG).

Belongs to the triosephosphate isomerase family. As to quaternary structure, homodimer.

Its subcellular location is the cytoplasm. It carries out the reaction D-glyceraldehyde 3-phosphate = dihydroxyacetone phosphate. It participates in carbohydrate biosynthesis; gluconeogenesis. It functions in the pathway carbohydrate degradation; glycolysis; D-glyceraldehyde 3-phosphate from glycerone phosphate: step 1/1. In terms of biological role, involved in the gluconeogenesis. Catalyzes stereospecifically the conversion of dihydroxyacetone phosphate (DHAP) to D-glyceraldehyde-3-phosphate (G3P). The chain is Triosephosphate isomerase from Nostoc punctiforme (strain ATCC 29133 / PCC 73102).